Here is a 212-residue protein sequence, read N- to C-terminus: uncharacterized protein (212 aa).

The Toprim domain maps to asparagine 105–lysine 187.

This is an uncharacterized protein from Mycoplasma pneumoniae (strain ATCC 29342 / M129 / Subtype 1) (Mycoplasmoides pneumoniae).